A 329-amino-acid polypeptide reads, in one-letter code: Phenylalanine--tRNA ligase alpha subunit (329 aa).

E254 lines the Mg(2+) pocket.

This sequence belongs to the class-II aminoacyl-tRNA synthetase family. Phe-tRNA synthetase alpha subunit type 1 subfamily. Tetramer of two alpha and two beta subunits. Requires Mg(2+) as cofactor.

It localises to the cytoplasm. The catalysed reaction is tRNA(Phe) + L-phenylalanine + ATP = L-phenylalanyl-tRNA(Phe) + AMP + diphosphate + H(+). In Actinobacillus succinogenes (strain ATCC 55618 / DSM 22257 / CCUG 43843 / 130Z), this protein is Phenylalanine--tRNA ligase alpha subunit.